A 406-amino-acid chain; its full sequence is MDRLDANVSSNEGFGSVEKVVLLTFFAMVILMAILGNLLVMVAVCRDRQLRKIKTNYFIVSLAFADLLVSVLVNAFGAIELVQDIWFYGEMFCLVRTSLDVLLTTASIFHLCCISLDRYYAICCQPLVYRNKMTPLRIALMLGGCWVIPMFISFLPIMQGWNNIGIVDVIEKRKFNHNSNSTFCVFMVNKPYAITCSVVAFYIPFLLMVLAYYRIYVTAKEHAQQIQMLQRAGATSESRPQTADQHSTHRMRTETKAAKTLCVIMGCFCFCWAPFFVTNIVDPFIDYTVPEKVWTAFLWLGYINSGLNPFLYAFLNKSFRRAFLIILCCDDERYKRPPILGQTVPCSTTTINGSTHVLRDTVECGGQWESRCHLTATSPLVAAQPVIRRPQDNDLEDSCSLKRSQS.

The Extracellular segment spans residues 1–19 (MDRLDANVSSNEGFGSVEK). A glycan (N-linked (GlcNAc...) asparagine) is linked at asparagine 7. The helical transmembrane segment at 20–44 (VVLLTFFAMVILMAILGNLLVMVAV) threads the bilayer. At 45–54 (CRDRQLRKIK) the chain is on the cytoplasmic side. The helical transmembrane segment at 55 to 78 (TNYFIVSLAFADLLVSVLVNAFGA) threads the bilayer. Residues 79–92 (IELVQDIWFYGEMF) are Extracellular-facing. A helical membrane pass occupies residues 93 to 117 (CLVRTSLDVLLTTASIFHLCCISLD). Cysteine 93 and cysteine 184 are oxidised to a cystine. Residue aspartate 100 participates in serotonin binding. At 118 to 133 (RYYAICCQPLVYRNKM) the chain is on the cytoplasmic side. A helical membrane pass occupies residues 134–157 (TPLRIALMLGGCWVIPMFISFLPI). At 158-188 (MQGWNNIGIVDVIEKRKFNHNSNSTFCVFMV) the chain is on the extracellular side. A helical membrane pass occupies residues 189 to 212 (NKPYAITCSVVAFYIPFLLMVLAY). The Cytoplasmic portion of the chain corresponds to 213–257 (YRIYVTAKEHAQQIQMLQRAGATSESRPQTADQHSTHRMRTETKA). A helical membrane pass occupies residues 258-283 (AKTLCVIMGCFCFCWAPFFVTNIVDP). Asparagine 279 is a serotonin binding site. The Extracellular segment spans residues 284 to 290 (FIDYTVP). Residues 291-314 (EKVWTAFLWLGYINSGLNPFLYAF) form a helical membrane-spanning segment. Over 315-406 (LNKSFRRAFL…DSCSLKRSQS (92 aa)) the chain is Cytoplasmic.

This sequence belongs to the G-protein coupled receptor 1 family. As to quaternary structure, interacts (via C-terminus 330-346 AA) with GRK5; this interaction is promoted by 5-HT (serotonin). As to expression, in brain, isoform 5-HT4S is restricted to the striatum. In peripheral tissues, differential expression is also observed in the atrium of the heart where only isoform 5-HT4S is detectable. In brain, isoform 5-HT4L is expressed throughout the brain, except in the cerebellum.

Its subcellular location is the cell membrane. The protein localises to the endosome membrane. G-protein coupled receptor for 5-hydroxytryptamine (serotonin), a biogenic hormone that functions as a neurotransmitter, a hormone and a mitogen. Ligand binding causes a conformation change that triggers signaling via guanine nucleotide-binding proteins (G proteins) and modulates the activity of downstream effectors. HTR4 is coupled to G(s) G alpha proteins and mediates activation of adenylate cyclase activity. The sequence is that of 5-hydroxytryptamine receptor 4 (Htr4) from Rattus norvegicus (Rat).